Consider the following 805-residue polypeptide: Leucine--tRNA ligase (805 aa).

The short motif at 40-51 (PYPSGAGLHVGH) is the 'HIGH' region element. Residues 576–580 (KMSKS) carry the 'KMSKS' region motif. Lysine 579 contacts ATP.

This sequence belongs to the class-I aminoacyl-tRNA synthetase family.

It is found in the cytoplasm. It carries out the reaction tRNA(Leu) + L-leucine + ATP = L-leucyl-tRNA(Leu) + AMP + diphosphate. In Brevibacillus brevis (strain 47 / JCM 6285 / NBRC 100599), this protein is Leucine--tRNA ligase.